Consider the following 187-residue polypeptide: Probable DNA-directed RNA polymerase subunit delta (187 aa).

The HTH HARE-type domain occupies 14 to 81 (LSMIEVAHAL…GNNVWALRSW (68 aa)). The interval 96-187 (EIEDEEEEKP…EDDSDDTDED (92 aa)) is disordered. Composition is skewed to acidic residues over residues 117 to 149 (IEDEIDPEDEEGTKETTEEDMSYDTQAEDEDKD) and 157 to 187 (ELAEVELDNVDEEVDIELEDDEDDSDDTDED).

It belongs to the RpoE family. In terms of assembly, RNAP is composed of a core of 2 alpha, a beta and a beta' subunits. The core is associated with a delta subunit and one of several sigma factors.

Functionally, participates in both the initiation and recycling phases of transcription. In the presence of the delta subunit, RNAP displays an increased specificity of transcription, a decreased affinity for nucleic acids, and an increased efficiency of RNA synthesis because of enhanced recycling. The sequence is that of Probable DNA-directed RNA polymerase subunit delta from Lactococcus lactis subsp. cremoris (strain SK11).